A 200-amino-acid chain; its full sequence is Holliday junction branch migration complex subunit RuvA (200 aa).

The domain I stretch occupies residues 1-64; it reads MYAYFRGRLV…EDALQLYGFA (64 aa). The interval 65–143 is domain II; that stretch reads TEEEKQLFRL…KLAPVGSAVA (79 aa). A flexible linker region spans residues 144-154; it reads SVAADRGGFRE. Residues 154–200 form a domain III region; that stretch reads EDAVNALMTLGFPRPVANQAVGCALEPEPDASLEVVIKRALATMHNR.

Belongs to the RuvA family. In terms of assembly, homotetramer. Forms an RuvA(8)-RuvB(12)-Holliday junction (HJ) complex. HJ DNA is sandwiched between 2 RuvA tetramers; dsDNA enters through RuvA and exits via RuvB. An RuvB hexamer assembles on each DNA strand where it exits the tetramer. Each RuvB hexamer is contacted by two RuvA subunits (via domain III) on 2 adjacent RuvB subunits; this complex drives branch migration. In the full resolvosome a probable DNA-RuvA(4)-RuvB(12)-RuvC(2) complex forms which resolves the HJ.

Its subcellular location is the cytoplasm. In terms of biological role, the RuvA-RuvB-RuvC complex processes Holliday junction (HJ) DNA during genetic recombination and DNA repair, while the RuvA-RuvB complex plays an important role in the rescue of blocked DNA replication forks via replication fork reversal (RFR). RuvA specifically binds to HJ cruciform DNA, conferring on it an open structure. The RuvB hexamer acts as an ATP-dependent pump, pulling dsDNA into and through the RuvAB complex. HJ branch migration allows RuvC to scan DNA until it finds its consensus sequence, where it cleaves and resolves the cruciform DNA. This is Holliday junction branch migration complex subunit RuvA from Chlorobium phaeovibrioides (strain DSM 265 / 1930) (Prosthecochloris vibrioformis (strain DSM 265)).